The sequence spans 675 residues: NADH-quinone oxidoreductase subunit G (675 aa).

The 78-residue stretch at 1–78 folds into the 2Fe-2S ferredoxin-type domain; that stretch reads MIKLIIDGSE…GMVIHTDTPM (78 aa). The [2Fe-2S] cluster site is built by C34, C45, C48, and C62. Residues 78–117 form the 4Fe-4S His(Cys)3-ligated-type domain; the sequence is MVKKAREGVMEFLLINHPLDCPICDQGGECDLQDQAFRYG. 8 residues coordinate [4Fe-4S] cluster: H94, C98, C101, C107, C146, C149, C152, and C196. Positions 215-271 constitute a 4Fe-4S Mo/W bis-MGD-type domain; it reads LKHTASIGVHDAEGSNIRIDSRADEIMRILPRVNEAINEEWLSDKNRFCYDGLKYQR.

Belongs to the complex I 75 kDa subunit family. [2Fe-2S] cluster serves as cofactor. Requires [4Fe-4S] cluster as cofactor.

It carries out the reaction a quinone + NADH + 5 H(+)(in) = a quinol + NAD(+) + 4 H(+)(out). Functionally, NDH-1 shuttles electrons from NADH, via FMN and iron-sulfur (Fe-S) centers, to quinones in the respiratory chain. Couples the redox reaction to proton translocation (for every two electrons transferred, four hydrogen ions are translocated across the cytoplasmic membrane), and thus conserves the redox energy in a proton gradient. This Rickettsia prowazekii (strain Madrid E) protein is NADH-quinone oxidoreductase subunit G (nuoG).